We begin with the raw amino-acid sequence, 524 residues long: Keratin, type II cytoskeletal 71 (524 aa).

Residues 1–130 form a head region; the sequence is MSRQFTCKSG…DPEIQKVRAQ (130 aa). Positions 131–166 are coil 1A; it reads EREQIKALNNKFASFIDKVRFLEQQNQVLQTKWELL. In terms of domain architecture, IF rod spans 131-444; the sequence is EREQIKALNN…KLLESEECRM (314 aa). Residues 167-185 form a linker 1 region; it reads QQLDLNNCKNNLEPILEGH. The coil 1B stretch occupies residues 186–277; the sequence is ISNMRKQLET…CLFEAEMAQI (92 aa). The segment at 278 to 301 is linker 12; it reads QSHISDMSVILSMDNNRNLDLDSI. The segment at 302–440 is coil 2; the sequence is IDEVRAQYEE…ATYRKLLESE (139 aa). The interval 441 to 524 is tail; that stretch reads ECRMSGEYSS…LSTPSKKGGR (84 aa). A disordered region spans residues 493-524; the sequence is GGENRSRGSASDYKDTLTKGSSLSTPSKKGGR. The span at 494–509 shows a compositional bias: basic and acidic residues; it reads GENRSRGSASDYKDTL. A compositionally biased stretch (polar residues) spans 510-524; the sequence is TKGSSLSTPSKKGGR.

It belongs to the intermediate filament family. In terms of assembly, heterodimer of a type I and a type II keratin. Associates with KRT16 and/or KRT17. Specifically expressed in the inner root sheath (IRS) of the hair follicle. Present in Henle and the Huxley layers of the IRS, while expression in the cuticle is unsure (at protein level).

It is found in the cytoplasm. Its subcellular location is the cytoskeleton. Plays a central role in hair formation. Essential component of keratin intermediate filaments in the inner root sheath (IRS) of the hair follicle. The chain is Keratin, type II cytoskeletal 71 (Krt71) from Mus musculus (Mouse).